The following is a 493-amino-acid chain: MNNLVILPILIPFIVGSFLILFAKHHSLQRVISGFAVVGMLLVSIYLAVDVYQNGITVLELGNWQAPFGIVLVADLFATMMVILASIVGVVCLFFAFQTISSEREKYYFYPFYFFLLAGVNGAFLTGDLFNLFVFFEVMLIASYILIVLGGTKYQLRESLKYVVINVFASILFIVGVAYIYSITGTLNMADLAVKVGELEQTGVLNVIAVIFLVVFAMKGGLFPLYFWLPRSYFGPPAAIAALFGGLLTKVGIYAIMRTFTLIFNHDPGFTHTLILILAGLTMFFGVLGAVSQFDFKRILSYHIISQVGYMVMGLGIYTQLAIAGAIYYIAHHIIVKAALFLFAGATQRITGTTDLKKMGGLLKTHPWLAWMFFISAISLAGIPPLSGFFSKFALILAAFLNENYIIAAVALAVGLLTLFSMMKIFIYAFWGEQKHTEEQANFKVGKLLLPIVPLVALTIILGFAAEPIFQYSLQVADQILDPTIYIESVLKE.

Transmembrane regions (helical) follow at residues 4–23, 30–52, 72–94, 107–126, 130–149, 162–184, 204–226, 233–255, 270–292, 299–321, 325–347, 368–390, 405–427, and 448–470; these read LVIL…ILFA, RVIS…VDVY, LVAD…VCLF, YYFY…AFLT, FNLF…LIVL, YVVI…YSIT, VLNV…FPLY, YFGP…GIYA, FTHT…GAVS, ILSY…YTQL, GAIY…AGAT, WLAW…SGFF, YIIA…KIFI, and LLLP…EPIF.

Belongs to the CPA3 antiporters (TC 2.A.63) subunit D family. As to quaternary structure, forms a heterooligomeric complex that consists of seven subunits: MrpA, MrpB, MrpC, MrpD, MrpE, MrpF and MrpG.

The protein resides in the cell membrane. Its function is as follows. Mnh complex is a Na(+)Li(+)/H(+) antiporter involved in Na(+) and/or Li(+) excretion and Na(+) resistance. Na(+)/H(+) antiport consumes a transmembrane electrical potential, and is thus inferred to be electrogenic. Does not transport K(+), Ca(2+) or Mg(2+). In terms of biological role, mrp complex is a Na(+)/H(+) antiporter involved in Na(+) excretion and Na(+) resistance. The chain is Na(+)/H(+) antiporter subunit D (mrpD) from Alkalihalophilus pseudofirmus (strain ATCC BAA-2126 / JCM 17055 / OF4) (Bacillus pseudofirmus).